The primary structure comprises 124 residues: MILVDTSVWIEHLRAADARLVELLGDDEAGCHPLVIEELALGSIKQRDVVLDLLANLYQFPVVTHDEVLRLVGRRRLWGRGLGAVDANLLGSVALVGGARLWTRDKRLKAACAESGVALAEEVS.

Positions 2–112 (ILVDTSVWIE…TRDKRLKAAC (111 aa)) constitute a PINc domain. Mg(2+)-binding residues include Asp-5 and Asp-86.

The protein belongs to the PINc/VapC protein family. Mg(2+) serves as cofactor.

Its function is as follows. Toxic component of a type II toxin-antitoxin (TA) system. An RNase. Its toxic effect is neutralized by coexpression with cognate antitoxin VapB32. This chain is Ribonuclease VapC32, found in Mycobacterium tuberculosis (strain CDC 1551 / Oshkosh).